A 564-amino-acid chain; its full sequence is DNA ligase (564 aa).

An ATP-binding site is contributed by Glu-234. Catalysis depends on Lys-236, which acts as the N6-AMP-lysine intermediate. The ATP site is built by Arg-241, Arg-256, Glu-288, and Phe-323. Position 288 (Glu-288) interacts with a divalent metal cation. Glu-383 provides a ligand contact to a divalent metal cation. ATP is bound by residues Arg-399 and Lys-403.

It belongs to the ATP-dependent DNA ligase family. The cofactor is a divalent metal cation.

It catalyses the reaction ATP + (deoxyribonucleotide)n-3'-hydroxyl + 5'-phospho-(deoxyribonucleotide)m = (deoxyribonucleotide)n+m + AMP + diphosphate.. DNA ligase that seals nicks in double-stranded DNA during DNA replication, DNA recombination and DNA repair. It is not essential for viral replication and recombination. In Vertebrata (FPV), this protein is DNA ligase (LIG).